Reading from the N-terminus, the 341-residue chain is Glycerol-3-phosphate dehydrogenase [NAD(P)+] (341 aa).

Residues serine 14, phenylalanine 15, arginine 35, and lysine 108 each contribute to the NADPH site. 2 residues coordinate sn-glycerol 3-phosphate: lysine 108 and glycine 136. Alanine 140 is a binding site for NADPH. Lysine 191, aspartate 244, serine 254, arginine 255, and asparagine 256 together coordinate sn-glycerol 3-phosphate. Lysine 191 serves as the catalytic Proton acceptor. Arginine 255 provides a ligand contact to NADPH. Positions 279 and 281 each coordinate NADPH.

It belongs to the NAD-dependent glycerol-3-phosphate dehydrogenase family.

Its subcellular location is the cytoplasm. The enzyme catalyses sn-glycerol 3-phosphate + NAD(+) = dihydroxyacetone phosphate + NADH + H(+). It catalyses the reaction sn-glycerol 3-phosphate + NADP(+) = dihydroxyacetone phosphate + NADPH + H(+). The protein operates within membrane lipid metabolism; glycerophospholipid metabolism. Its function is as follows. Catalyzes the reduction of the glycolytic intermediate dihydroxyacetone phosphate (DHAP) to sn-glycerol 3-phosphate (G3P), the key precursor for phospholipid synthesis. This Pseudomonas syringae pv. syringae (strain B728a) protein is Glycerol-3-phosphate dehydrogenase [NAD(P)+].